Consider the following 358-residue polypeptide: Leukotriene B4 receptor 2 (358 aa).

Topologically, residues 1-24 (MSVCYRPPGNETLLSWKTSRATGT) are extracellular. An N-linked (GlcNAc...) asparagine glycan is attached at N10. The helical transmembrane segment at 25–45 (AFLLLAALLGLPGNGFVVWSL) threads the bilayer. The Cytoplasmic segment spans residues 46-60 (AGWRPARGRPLAATL). A helical membrane pass occupies residues 61-81 (VLHLALADGAVLLLTPLFVAF). At 82–96 (LTRQAWPLGQAGCKA) the chain is on the extracellular side. A helical membrane pass occupies residues 97-117 (VYYVCALSMYASVLLTGLLSL). The Cytoplasmic portion of the chain corresponds to 118-140 (QRCLAVTRPFLAPRLRSPALARR). The helical transmembrane segment at 141–161 (LLLAVWLAALLLAVPAAVYRH) threads the bilayer. Over 162–185 (LWRDRVCQLCHPSPVHAAAHLSLE) the chain is Extracellular. A helical transmembrane segment spans residues 186–206 (TLTAFVLPFGLMLGCYSVTLA). The Cytoplasmic segment spans residues 207 to 224 (RLRGARWGSGRHGARVGR). The helical transmembrane segment at 225–245 (LVSAIVLAFGLLWAPYHAVNL) threads the bilayer. Residues 246–275 (LQAVAALAPPEGALAKLGGAGQAARAGTTA) are Extracellular-facing. Residues 276-296 (LAFFSSSVNPVLYVFTAGDLL) traverse the membrane as a helical segment. At 297–358 (PRAGPRFLTR…MEKDGPEWDL (62 aa)) the chain is on the cytoplasmic side. Residues 311–358 (SGEARGGGRSREGTMELRTTPQLKVVGQGRGNGDPGGGMEKDGPEWDL) form a disordered region. Residues 338–348 (QGRGNGDPGGG) are compositionally biased toward gly residues. The span at 349–358 (MEKDGPEWDL) shows a compositional bias: basic and acidic residues.

The protein belongs to the G-protein coupled receptor 1 family. As to expression, widely expressed.

Its subcellular location is the cell membrane. Low-affinity receptor for leukotrienes including leukotriene B4. Mediates chemotaxis of granulocytes and macrophages. The response is mediated via G-proteins that activate a phosphatidylinositol-calcium second messenger system. The rank order of affinities for the leukotrienes is LTB4 &gt; 12-epi-LTB4 &gt; LTB5 &gt; LTB3. This Homo sapiens (Human) protein is Leukotriene B4 receptor 2 (LTB4R2).